A 349-amino-acid chain; its full sequence is UPF0324 inner membrane protein YeiH (349 aa).

Topologically, residues 1-12 (MTELTLQNHRRT) are periplasmic. The chain crosses the membrane as a helical span at residues 13–35 (MWHFIPGLALSAVITGVALWGGA). Over 36–38 (IPA) the chain is Cytoplasmic. The helical transmembrane segment at 39-61 (VAGAGFSALTLAILLGMVIGNTV) threads the bilayer. Over 62–99 (YPQIWKQCDGGVLFAKQHLLRLGIILYGFRLTFSQIAD) the chain is Periplasmic. Residues 100–122 (VGISGIVIDVLTLSSTFMLACFL) form a helical membrane-spanning segment. Residues 123 to 131 (GQKVFGLDR) lie on the Cytoplasmic side of the membrane. The chain crosses the membrane as a helical span at residues 132 to 151 (HTSWLIGAGSSICGAAAVLA). At 152 to 162 (TEPVVKAEASK) the chain is on the periplasmic side. Residues 163-185 (VTVAVATVVIFGTIAIFLYPAMY) traverse the membrane as a helical segment. The Cytoplasmic segment spans residues 186 to 261 (PLLAHWFSPE…SPATGAEKSK (76 aa)). Residues 262-284 (ITIPWFAIFFIVVAIFNSFHLLP) traverse the membrane as a helical segment. The Periplasmic segment spans residues 285–290 (KAVVDM). The chain crosses the membrane as a helical span at residues 291-313 (LVTLDTVLLAMAMAALGLTTHVS). The Cytoplasmic segment spans residues 314–322 (ALKKAGAKP). A helical membrane pass occupies residues 323-345 (LLMALALFAWLIIGGGAINVLIH). Over 346–349 (SLIA) the chain is Periplasmic.

This sequence belongs to the UPF0324 family.

The protein localises to the cell inner membrane. The polypeptide is UPF0324 inner membrane protein YeiH (yeiH) (Salmonella typhi).